A 483-amino-acid polypeptide reads, in one-letter code: tRNA sulfurtransferase (483 aa).

In terms of domain architecture, THUMP spans 62–166 (PQICDALTRV…QDKLTLIKAR (105 aa)). ATP-binding positions include 184–185 (LI), Lys266, Gly288, and Gln297. Cysteines 345 and 457 form a disulfide. Residues 405-483 (LADTDVLLDI…GYTNVKVYRP (79 aa)) enclose the Rhodanese domain. Residue Cys457 is the Cysteine persulfide intermediate of the active site.

It belongs to the ThiI family.

Its subcellular location is the cytoplasm. The catalysed reaction is [ThiI sulfur-carrier protein]-S-sulfanyl-L-cysteine + a uridine in tRNA + 2 reduced [2Fe-2S]-[ferredoxin] + ATP + H(+) = [ThiI sulfur-carrier protein]-L-cysteine + a 4-thiouridine in tRNA + 2 oxidized [2Fe-2S]-[ferredoxin] + AMP + diphosphate. It catalyses the reaction [ThiS sulfur-carrier protein]-C-terminal Gly-Gly-AMP + S-sulfanyl-L-cysteinyl-[cysteine desulfurase] + AH2 = [ThiS sulfur-carrier protein]-C-terminal-Gly-aminoethanethioate + L-cysteinyl-[cysteine desulfurase] + A + AMP + 2 H(+). It participates in cofactor biosynthesis; thiamine diphosphate biosynthesis. In terms of biological role, catalyzes the ATP-dependent transfer of a sulfur to tRNA to produce 4-thiouridine in position 8 of tRNAs, which functions as a near-UV photosensor. Also catalyzes the transfer of sulfur to the sulfur carrier protein ThiS, forming ThiS-thiocarboxylate. This is a step in the synthesis of thiazole, in the thiamine biosynthesis pathway. The sulfur is donated as persulfide by IscS. This Yersinia enterocolitica serotype O:8 / biotype 1B (strain NCTC 13174 / 8081) protein is tRNA sulfurtransferase.